The chain runs to 535 residues: MLPVSRLCVRSSLRKLVFVRFVSCTSCGVTLQNNNVRGTGFYTPPKAQIERKRPVIEDLKYLLFSQDLQSLKSELSAEERPKKNKPLICKRCNDALHHNTFSKEDFRRYSMQEVYRHVPAGADIYHVVPLTDFPLQLNSAVLKDSRYNSALLLSKGDQVTPDKSLLQRKAPQFFKDMLRLKMNYNSNKSIAFSASKGWNIQSVYSVLRSNSFLIGCPNSGKSTLVNALLKKFPSLKPSEGNNASEAEIVRGAGVSNIPNMTRDLQSYNIGSKVINDLPGYSTNYGSPGPEDALDAKVLEKIQKTHLFKKTKLVKQRYTSLKGTDAGRCYTVSGIFYLVPPPDTINQVVNYIPGNERQYRNIDKALSVVNSEHACPEKGPLRQYVGVQKAMESKDNYVRHVLPPFQGSIEVVLKEIGYFQLKTTGKYKFLGLHEVWVPKGVDVCIREPIARLIDEGYEGYLSSEGKKKAIPEKREVFSATYPMSFEETDTLQKMKEMFLERTKNDVLARKFISSNPLKIIGTAQKEAPNLYWYYKW.

The N-terminal 38 residues, Met-1 to Gly-38, are a transit peptide targeting the mitochondrion. The region spanning Met-111–Asn-283 is the CP-type G domain.

The protein belongs to the TRAFAC class YlqF/YawG GTPase family. GEP3 subfamily.

It localises to the mitochondrion. In terms of biological role, may be involved in the mitochondrial lipid metabolism. The sequence is that of Genetic interactor of prohibitins 3, mitochondrial (GEP3) from Lachancea thermotolerans (strain ATCC 56472 / CBS 6340 / NRRL Y-8284) (Yeast).